The sequence spans 859 residues: Anoctamin-7 (859 aa).

Residues 1-297 are Cytoplasmic-facing; the sequence is MLRGQAREED…YFAWLGFYTG (297 aa). A disordered region spans residues 25–50; it reads GCSYGSTAQASEAGKQQVAPSRVGSS. Residues 298 to 318 traverse the membrane as a helical segment; sequence WLLPAAVVGTVVFLVGCFLVF. The Extracellular segment spans residues 319–362; that stretch reads SDIPTQELCHSSDSFDMCPLCSDCSFWLLSSACTLAQAGRLFDH. The helical transmembrane segment at 363–383 threads the bilayer; sequence GGTVFFSLFMALWAVLLLEYW. The Cytoplasmic segment spans residues 384–441; that stretch reads KRKNATLAYRWDCSDYEDIEERPRPQFAATAPMTALNPITGEDEPYFPEKNRVRRMLA. Residues 442–462 traverse the membrane as a helical segment; that stretch reads GSVVLLMMVAVVIMCLVSVIL. The Extracellular segment spans residues 463–492; it reads YRAVMAIIVSRSDNAFLSAWASRIASLTGS. A helical membrane pass occupies residues 493-513; that stretch reads VVNLVFILILSKVYVLLAQVL. Topologically, residues 514-530 are cytoplasmic; that stretch reads TRWEMHRTQTEFEDAFT. Residues 531–551 traverse the membrane as a helical segment; it reads LKVFIFQFVNFYASPVYIAFF. Residues 552 to 651 lie on the Extracellular side of the membrane; the sequence is KGRFVGYPGN…FHEYLEMVLQ (100 aa). A helical transmembrane segment spans residues 652 to 672; that stretch reads FGFVTIFVAACPLAPLFALLN. The Cytoplasmic portion of the chain corresponds to 673-700; it reads NWVEIRLDARKFVCEYRRPVAERAQDIG. A helical transmembrane segment spans residues 701–721; the sequence is IWFHILTGLTHLAVISNAFLL. Topologically, residues 722-780 are extracellular; it reads AFSSDFLPRVYYSWTHAPDLHGFLNFTLARAPPTFTSAHNRTCRYRAFRDDDGHYSPTY. 2 N-linked (GlcNAc...) asparagine glycosylation sites follow: N746 and N761. The helical transmembrane segment at 781–801 threads the bilayer; it reads WTLLAIRLAFVIVFEHVVFSI. The Cytoplasmic portion of the chain corresponds to 802–859; it reads GRVLDLLVPDIPESVEIKVKREYYLAKQALAENEALLGATGVKDDQPPSSEPSLGLPA.

The protein belongs to the anoctamin family. In terms of tissue distribution, highly expressed in the stomach. Expressed at low levels in small intestine and large intestine.

It is found in the cell membrane. It localises to the endoplasmic reticulum. It catalyses the reaction a 1,2-diacyl-sn-glycero-3-phospho-L-serine(in) = a 1,2-diacyl-sn-glycero-3-phospho-L-serine(out). It carries out the reaction a beta-D-galactosyl-(1&lt;-&gt;1')-N-acylsphing-4-enine(out) = a beta-D-galactosyl-(1&lt;-&gt;1')-N-acylsphing-4-enine(in). The enzyme catalyses a 1,2-diacyl-sn-glycero-3-phosphocholine(in) = a 1,2-diacyl-sn-glycero-3-phosphocholine(out). Its function is as follows. Has calcium-dependent phospholipid scramblase activity; scrambles phosphatidylserine, phosphatidylcholine and galactosylceramide. Does not exhibit calcium-activated chloride channel (CaCC) activity. May play a role in cell-cell interactions. This is Anoctamin-7 (Ano7) from Mus musculus (Mouse).